A 112-amino-acid polypeptide reads, in one-letter code: Seminal vesicle secretory protein 4 (112 aa).

An N-terminal signal peptide occupies residues 1–21 (MKSTSLFLCSLLLLLVTGAIG). A disordered region spans residues 26–112 (EKYSQSEEVV…RSRFAQDVLN (87 aa)). 2 stretches are compositionally biased toward low complexity: residues 36 to 47 (SESFASGPSSGS) and 85 to 97 (RSSG…GESS).

It belongs to the SVP2/SVP5/SVP6 family. As to expression, testis.

It localises to the secreted. The protein resides in the extracellular space. This Rattus norvegicus (Rat) protein is Seminal vesicle secretory protein 4 (Svs4).